The following is a 284-amino-acid chain: Tropomyosin (284 aa).

Residues 1–38 (MEAIKKKMQAMKLEKDNAVDRAETAEQQSREAALRAEK) form a disordered region. Residues 1 to 284 (MEAIKKKMQA…DQTFSELTGY (284 aa)) adopt a coiled-coil conformation. Residues 12–38 (KLEKDNAVDRAETAEQQSREAALRAEK) are compositionally biased toward basic and acidic residues.

Belongs to the tropomyosin family. In terms of assembly, homodimer.

Its function is as follows. Tropomyosin, in association with the troponin complex, plays a central role in the calcium dependent regulation of muscle contraction. In Rhipicephalus microplus (Cattle tick), this protein is Tropomyosin.